The following is a 158-amino-acid chain: Transcription elongation factor GreA (158 aa).

Positions 10-75 (TKEGKEKLEQ…QMLENMIRNA (66 aa)) form a coiled coil.

It belongs to the GreA/GreB family.

In terms of biological role, necessary for efficient RNA polymerase transcription elongation past template-encoded arresting sites. The arresting sites in DNA have the property of trapping a certain fraction of elongating RNA polymerases that pass through, resulting in locked ternary complexes. Cleavage of the nascent transcript by cleavage factors such as GreA or GreB allows the resumption of elongation from the new 3'terminus. GreA releases sequences of 2 to 3 nucleotides. This chain is Transcription elongation factor GreA, found in Geobacillus kaustophilus (strain HTA426).